The primary structure comprises 160 residues: Cyclic pyranopterin monophosphate synthase (160 aa).

Substrate is bound by residues 77–79 (MCH) and 114–115 (ME). D129 is an active-site residue.

Belongs to the MoaC family. In terms of assembly, homohexamer; trimer of dimers.

It carries out the reaction (8S)-3',8-cyclo-7,8-dihydroguanosine 5'-triphosphate = cyclic pyranopterin phosphate + diphosphate. It functions in the pathway cofactor biosynthesis; molybdopterin biosynthesis. Catalyzes the conversion of (8S)-3',8-cyclo-7,8-dihydroguanosine 5'-triphosphate to cyclic pyranopterin monophosphate (cPMP). The sequence is that of Cyclic pyranopterin monophosphate synthase from Listeria welshimeri serovar 6b (strain ATCC 35897 / DSM 20650 / CCUG 15529 / CIP 8149 / NCTC 11857 / SLCC 5334 / V8).